Here is a 393-residue protein sequence, read N- to C-terminus: CCA-adding enzyme (393 aa).

Positions 27 and 30 each coordinate ATP. Positions 27 and 30 each coordinate CTP. D40 and D42 together coordinate Mg(2+). 5 residues coordinate ATP: R111, D154, R157, R160, and R163. Positions 111, 154, 157, 160, and 163 each coordinate CTP.

Belongs to the tRNA nucleotidyltransferase/poly(A) polymerase family. Bacterial CCA-adding enzyme type 3 subfamily. In terms of assembly, homodimer. Mg(2+) is required as a cofactor.

It carries out the reaction a tRNA precursor + 2 CTP + ATP = a tRNA with a 3' CCA end + 3 diphosphate. The enzyme catalyses a tRNA with a 3' CCA end + 2 CTP + ATP = a tRNA with a 3' CCACCA end + 3 diphosphate. Its function is as follows. Catalyzes the addition and repair of the essential 3'-terminal CCA sequence in tRNAs without using a nucleic acid template. Adds these three nucleotides in the order of C, C, and A to the tRNA nucleotide-73, using CTP and ATP as substrates and producing inorganic pyrophosphate. tRNA 3'-terminal CCA addition is required both for tRNA processing and repair. Also involved in tRNA surveillance by mediating tandem CCA addition to generate a CCACCA at the 3' terminus of unstable tRNAs. While stable tRNAs receive only 3'-terminal CCA, unstable tRNAs are marked with CCACCA and rapidly degraded. This is CCA-adding enzyme from Listeria monocytogenes serovar 1/2a (strain ATCC BAA-679 / EGD-e).